Consider the following 99-residue polypeptide: Large ribosomal subunit protein bL21 (99 aa).

This sequence belongs to the bacterial ribosomal protein bL21 family. As to quaternary structure, part of the 50S ribosomal subunit. Contacts protein L20.

This protein binds to 23S rRNA in the presence of protein L20. The chain is Large ribosomal subunit protein bL21 from Mesomycoplasma hyopneumoniae (strain 232) (Mycoplasma hyopneumoniae).